Reading from the N-terminus, the 110-residue chain is Protein RnfH (110 aa).

Residues 90-110 (VDKTRREGSIEGRKWLPKDSR) are disordered.

The protein belongs to the UPF0125 (RnfH) family.

The chain is Protein RnfH from Burkholderia mallei (strain NCTC 10229).